The following is a 428-amino-acid chain: MLLLAGLLRRARPPRRPSVRRLSGLLDRYGFVPPASLTPHSASDDGGAKKRRPKKPPYRPPSSLDRGGRPAARSDLPFDFRFSYTESSPGDKPIGLREPKYSPFGPGRLDRPWTGLCAPAVDTTLRDAHADDPAPAAERELEEARRRERERVLGEPLTPAERAFLVSKCQKSRTKKQINLGRDGLTHNMLNDIHNHWKNDEAVRVKCLGVPTVDMQNVCHQLEDKTGGLIIHRHGGQLILYRGRHYNPKKRPVIPLMLWKPAEPVYPRLIKTTIEGLTVEETKEMRKKGLYVPVLTKLAKNGYYASLVPMVRDAFLTDELVRIDSKGLPKSDYRKIGVKLRDLVPCIIVSFDKEQIIVWRGKDYNGTIQDNTQKTSVSVLEEESAGAESENGDQEQASSDWASDECSQLSSSDEMPDDKSAISEADSD.

The N-terminal 21 residues, 1 to 21 (MLLLAGLLRRARPPRRPSVRR), are a transit peptide targeting the mitochondrion. Disordered stretches follow at residues 33-100 (PPAS…REPK) and 129-152 (HADDPAPAAERELEEARRRERERV). CRM domains lie at 155-253 (EPLT…KRPV) and 275-371 (EGLT…IQDN). The disordered stretch occupies residues 378–428 (SVLEEESAGAESENGDQEQASSDWASDECSQLSSSDEMPDDKSAISEADSD). Acidic residues predominate over residues 380–393 (LEEESAGAESENGD). Positions 394 to 413 (QEQASSDWASDECSQLSSSD) are enriched in polar residues.

Part of large ribonucleo-protein complexes that include group IIB introns.

The protein resides in the mitochondrion. Its function is as follows. May be involved in the splicing of group IIB introns in mitochondria. The chain is CRS2-associated factor 1, mitochondrial from Oryza sativa subsp. japonica (Rice).